The primary structure comprises 43 residues: uncharacterized protein (43 aa).

The signal sequence occupies residues Met1 to Ser22.

This is an uncharacterized protein from Schizosaccharomyces pombe (strain 972 / ATCC 24843) (Fission yeast).